The following is a 239-amino-acid chain: Transcriptional regulatory protein RstA (239 aa).

A Response regulatory domain is found at 3–116 (TIVFVEDDAE…VLLARLRLHL (114 aa)). Residue aspartate 52 is modified to 4-aspartylphosphate. Positions 136-235 (YKALHFGTLT…VRNKGYLFAP (100 aa)) form a DNA-binding region, ompR/PhoB-type.

Phosphorylated by RstB.

Its subcellular location is the cytoplasm. Functionally, member of the two-component regulatory system RstB/RstA. The sequence is that of Transcriptional regulatory protein RstA (rstA) from Escherichia coli (strain K12).